A 274-amino-acid polypeptide reads, in one-letter code: MTLDDLKSNSMKDQPDEKSNGDKAEGPRSLSTLRWRPAALILGLLCLGLLVTVILLIIQLSQVSDLLKQQKVKLTHQEDILEGQALAQRQAEKSSQESQRELTEMIETLAHKLDEKSKKLMELQQQNLNLQKALEKAANFSGPCPQDWLWHEENCYKFSSGPFSWEKSRENCLSLDAQLLKINSTDDLEFIQQTIAHSSFPFWMGLSLRKPNNSWLWEDGTPLMPHLFRLQGAASQMYPSGTCAYIHRGIVFAENCILNAFSICQKRANLLRAQ.

The segment at 1–28 (MTLDDLKSNSMKDQPDEKSNGDKAEGPR) is disordered. The Cytoplasmic portion of the chain corresponds to 1–37 (MTLDDLKSNSMKDQPDEKSNGDKAEGPRSLSTLRWRP). Residues 13 to 26 (DQPDEKSNGDKAEG) are compositionally biased toward basic and acidic residues. Residues 38–60 (AALILGLLCLGLLVTVILLIIQL) traverse the membrane as a helical; Signal-anchor for type II membrane protein segment. Cysteine 46 is lipidated: S-palmitoyl cysteine. The interval 61-150 (SQVSDLLKQQ…SGPCPQDWLW (90 aa)) is neck. Over 61–274 (SQVSDLLKQQ…QKRANLLRAQ (214 aa)) the chain is Extracellular. A coiled-coil region spans residues 89-142 (RQAEKSSQESQRELTEMIETLAHKLDEKSKKLMELQQQNLNLQKALEKAANFSG). The N-linked (GlcNAc...) asparagine glycan is linked to asparagine 139. 3 cysteine pairs are disulfide-bonded: cysteine 144–cysteine 155, cysteine 172–cysteine 264, and cysteine 243–cysteine 256. The 115-residue stretch at 151–265 (HEENCYKFSS…CILNAFSICQ (115 aa)) folds into the C-type lectin domain.

Homodimer; disulfide-linked. May form a hexamer composed of 3 homodimers. Interacts with HSP70. N-glycosylated.

Its subcellular location is the cell membrane. It localises to the membrane raft. It is found in the secreted. In terms of biological role, receptor that mediates the recognition, internalization and degradation of oxidatively modified low density lipoprotein (oxLDL) by vascular endothelial cells. OxLDL is a marker of atherosclerosis that induces vascular endothelial cell activation and dysfunction, resulting in pro-inflammatory responses, pro-oxidative conditions and apoptosis. Its association with oxLDL induces the activation of NF-kappa-B through an increased production of intracellular reactive oxygen and a variety of pro-atherogenic cellular responses including a reduction of nitric oxide (NO) release, monocyte adhesion and apoptosis. In addition to binding oxLDL, it acts as a receptor for the HSP70 protein involved in antigen cross-presentation to naive T-cells in dendritic cells, thereby participating in cell-mediated antigen cross-presentation. Also involved in inflammatory process, by acting as a leukocyte-adhesion molecule at the vascular interface in endotoxin-induced inflammation. Also acts as a receptor for advanced glycation end (AGE) products, activated platelets, monocytes, apoptotic cells and both Gram-negative and Gram-positive bacteria. In Sus scrofa (Pig), this protein is Oxidized low-density lipoprotein receptor 1 (OLR1).